A 560-amino-acid polypeptide reads, in one-letter code: DNA ligase B (560 aa).

Residue lysine 124 is the N6-AMP-lysine intermediate of the active site.

Belongs to the NAD-dependent DNA ligase family. LigB subfamily.

It carries out the reaction NAD(+) + (deoxyribonucleotide)n-3'-hydroxyl + 5'-phospho-(deoxyribonucleotide)m = (deoxyribonucleotide)n+m + AMP + beta-nicotinamide D-nucleotide.. Functionally, catalyzes the formation of phosphodiester linkages between 5'-phosphoryl and 3'-hydroxyl groups in double-stranded DNA using NAD as a coenzyme and as the energy source for the reaction. The protein is DNA ligase B of Escherichia coli (strain K12 / DH10B).